Consider the following 692-residue polypeptide: Ino eighty subunit 1 (692 aa).

A compositionally biased stretch (basic and acidic residues) spans 1–25 (MGKRVYDPIHDTFQLREDNSDETKA). Residues 1 to 133 (MGKRVYDPIH…RHLKKPDGEP (133 aa)) form a disordered region. Ser-27 carries the post-translational modification Phosphoserine. The segment covering 28-56 (PMQSVKSGSQEEASPSSIQSETETVTTKS) has biased composition (polar residues). The span at 64–80 (EIDDKNDDDSTQSEEEN) shows a compositional bias: acidic residues. Residues 97 to 109 (GASTATGPVTTNT) are compositionally biased toward polar residues. Residues 340–385 (SKYVEVESKAQEQDMVDEQNEVKETEAENEKQESKAAYATTLFDIL) adopt a coiled-coil conformation. Over residues 465–485 (FMSKMEEGRKRERTNVTEVKK) the composition is skewed to basic and acidic residues. The disordered stretch occupies residues 465–550 (FMSKMEEGRK…VTPAAPTETE (86 aa)). Phosphoserine is present on residues Ser-487, Ser-493, and Ser-504. Positions 493-504 (SEEDGEGEDDKS) are enriched in acidic residues. Position 507 is a phosphothreonine (Thr-507). Residues 513–528 (SLLTPTPILESSSPMT) show a composition bias toward polar residues.

As to quaternary structure, component of the chromatin-remodeling INO80 complex, at least composed of ARP4, ARP5, ARP8, RVB1, RVB2, TAF14, NHP10, IES1, IES3, IES4, IES6, ACT1, IES2, IES5 and INO80.

It is found in the nucleus. Functionally, probably involved in transcription regulation via its interaction with the INO80 complex, a chromatin-remodeling complex. The polypeptide is Ino eighty subunit 1 (IES1) (Saccharomyces cerevisiae (strain ATCC 204508 / S288c) (Baker's yeast)).